A 215-amino-acid polypeptide reads, in one-letter code: Octanoyltransferase (215 aa).

The 176-residue stretch at 31–206 folds into the BPL/LPL catalytic domain; it reads TDAPDEVWLV…QLVKHLDYAE (176 aa). Residues 70-77, 137-139, and 150-152 each bind substrate; these read RGGQVTYH, SLG, and GLA. Cys168 serves as the catalytic Acyl-thioester intermediate.

It belongs to the LipB family.

It is found in the cytoplasm. It catalyses the reaction octanoyl-[ACP] + L-lysyl-[protein] = N(6)-octanoyl-L-lysyl-[protein] + holo-[ACP] + H(+). It functions in the pathway protein modification; protein lipoylation via endogenous pathway; protein N(6)-(lipoyl)lysine from octanoyl-[acyl-carrier-protein]: step 1/2. Its function is as follows. Catalyzes the transfer of endogenously produced octanoic acid from octanoyl-acyl-carrier-protein onto the lipoyl domains of lipoate-dependent enzymes. Lipoyl-ACP can also act as a substrate although octanoyl-ACP is likely to be the physiological substrate. The sequence is that of Octanoyltransferase from Pseudomonas fluorescens (strain ATCC BAA-477 / NRRL B-23932 / Pf-5).